Consider the following 148-residue polypeptide: UPF0178 protein CA_C2825 (148 aa).

Belongs to the UPF0178 family.

The sequence is that of UPF0178 protein CA_C2825 from Clostridium acetobutylicum (strain ATCC 824 / DSM 792 / JCM 1419 / IAM 19013 / LMG 5710 / NBRC 13948 / NRRL B-527 / VKM B-1787 / 2291 / W).